The chain runs to 99 residues: Defensin-A4 (99 aa).

An N-terminal signal peptide occupies residues 1 to 21; that stretch reads MKTLCLLFAVLCLVTWTQARG. Residues 22–68 constitute a propeptide that is removed on maturation; sequence AEVEENLTAQDGEVDIAGDNGDVQLTLNTDDFESFTLKTLTLGHPRV. Cystine bridges form between cysteine 73–cysteine 97, cysteine 75–cysteine 89, and cysteine 79–cysteine 96.

Belongs to the alpha-defensin family. Lowly expressed in spleen, and expressed at lower levels in kidney and lung.

The protein localises to the secreted. Functionally, has antimicrobial activity. The protein is Defensin-A4 of Ornithorhynchus anatinus (Duckbill platypus).